A 195-amino-acid chain; its full sequence is Imidazoleglycerol-phosphate dehydratase (195 aa).

It belongs to the imidazoleglycerol-phosphate dehydratase family.

Its subcellular location is the cytoplasm. It carries out the reaction D-erythro-1-(imidazol-4-yl)glycerol 3-phosphate = 3-(imidazol-4-yl)-2-oxopropyl phosphate + H2O. It participates in amino-acid biosynthesis; L-histidine biosynthesis; L-histidine from 5-phospho-alpha-D-ribose 1-diphosphate: step 6/9. In Paracoccus denitrificans (strain Pd 1222), this protein is Imidazoleglycerol-phosphate dehydratase.